A 140-amino-acid polypeptide reads, in one-letter code: 3-hydroxyacyl-[acyl-carrier-protein] dehydratase FabZ (140 aa).

The active site involves His47.

It belongs to the thioester dehydratase family. FabZ subfamily.

The protein resides in the cytoplasm. The enzyme catalyses a (3R)-hydroxyacyl-[ACP] = a (2E)-enoyl-[ACP] + H2O. Functionally, involved in unsaturated fatty acids biosynthesis. Catalyzes the dehydration of short chain beta-hydroxyacyl-ACPs and long chain saturated and unsaturated beta-hydroxyacyl-ACPs. The chain is 3-hydroxyacyl-[acyl-carrier-protein] dehydratase FabZ from Streptococcus uberis (strain ATCC BAA-854 / 0140J).